A 382-amino-acid polypeptide reads, in one-letter code: Putative UDP-sugar transporter DDB_G0278631 (382 aa).

A run of 7 helical transmembrane segments spans residues 117–137, 183–203, 211–231, 234–254, 264–284, 302–322, and 354–374; these read FSAS…ILHI, MYSA…YFIL, IIAS…TDLS, SLGY…LIYV, YDML…LMIV, FQAY…CIFF, and IIIH…SIWY.

Belongs to the TPT transporter family. SLC35D subfamily.

It is found in the membrane. Its function is as follows. May be nvolved in the import of UDP-sugars. This chain is Putative UDP-sugar transporter DDB_G0278631, found in Dictyostelium discoideum (Social amoeba).